The following is a 122-amino-acid chain: UPF0102 protein XAC0764 (122 aa).

The protein belongs to the UPF0102 family.

This Xanthomonas axonopodis pv. citri (strain 306) protein is UPF0102 protein XAC0764.